We begin with the raw amino-acid sequence, 238 residues long: Fatty acid metabolism regulator protein (238 aa).

The HTH gntR-type domain occupies 6–74; sequence KGPASFAEKY…HGKPTRVNNF (69 aa). The H-T-H motif DNA-binding region spans 34 to 53; the sequence is ERELSELIGVTRTTLREVLQ.

Homodimer.

Its subcellular location is the cytoplasm. Functionally, multifunctional regulator of fatty acid metabolism. This is Fatty acid metabolism regulator protein from Shewanella baltica (strain OS185).